A 394-amino-acid polypeptide reads, in one-letter code: Methionine import ATP-binding protein MetN 2 (394 aa).

The ABC transporter domain maps to 39–278 (VSLEQVGKVF…PRHGATRALL (240 aa)). 75-82 (GRSGAGKS) contacts ATP.

It belongs to the ABC transporter superfamily. Methionine importer (TC 3.A.1.24) family. In terms of assembly, the complex is composed of two ATP-binding proteins (MetN), two transmembrane proteins (MetI) and a solute-binding protein (MetQ).

The protein resides in the cell inner membrane. It catalyses the reaction L-methionine(out) + ATP + H2O = L-methionine(in) + ADP + phosphate + H(+). It carries out the reaction D-methionine(out) + ATP + H2O = D-methionine(in) + ADP + phosphate + H(+). Functionally, part of the ABC transporter complex MetNIQ involved in methionine import. Responsible for energy coupling to the transport system. In Burkholderia cenocepacia (strain HI2424), this protein is Methionine import ATP-binding protein MetN 2.